The sequence spans 2186 residues: MAGPVATSDRQQRLIFFGDQTVDALPCIKILTAQAHRLPALRRFLRDAADVIQVLLSSLEFDDHDHYRRFETICELAEIYSKQDGTHETIACALWTTAQFGDLVMRAELNPSILTGGQQSADPTYVVGICGGLLPAAATATARDINELLDIGRKLVAVAFRLGVAQWRRAMDIEGKPGRWAVTIVNVPAKQIRTILDAFNEDMEIPKHRQFYISFLAKGWVTVSGPPSLFPELWAYSSTLNAASKMQLPLGTPAHAAHLPPVNVSEIVGTGDVLDLTVRENFFTVSTSTCQPFQCQDLGSLLQESLRDITGKTLNIAGVNDYVISALDRNTPVRVSSFGPASQIASFKKTLEEAGYQVELDLGDPSLGNPEYPIDADSRDGSNLIAVVGQSVRFPGSEDVETFWENIKAGRSFETEIPASRFDLAHHYDATGSKTSSVTTKYGSFLENPGLFDNRLFNVSPREAKQMDPIQRILMMCSYEALQAAGYSPDGSLSTNSMRIATYFGQSGDDWRQVRASQEVDIYYIPGTVRSFAPGKLNYHYKWGGGNYAVDSACAASTTTMMLASQALLARDCDMALAGGGQLNAAPEPYAGLSRAGFLSKTTGGCKTFREDADGYCRGEGVGVVVLKRLEDALAENDNVLAVIRGADRNFSWDATSITHPSVSAQVKLVKSVLRNTGVEPEEIGFVEMHGTGTQAGDGVEMETVTTVFGSRPKDNPLYVGAVKANIGHGEAAAGVASVIKAIEVLRHRTIPTQAGFPGPRDPKFNHLDGMNIRIPESVVPFQPAPAPFSSDGKRKVLVNNFDASGGNNCVLLEEAPARDRETTADPRGVYTVAVSARTTNSLKNNISRLLGYLQSHPDASVADVAYTTTARRMHEDLKKAYTVQTASELVSLLQADLKKDLTAVQYRSPHSVVFAFTGQGAQYAGMGKQLFDTSAAFRESVQAFHELAVWQGFPEFLHLIADDQADVKAADPVQLQLAVVVLEMALANLWKSWGVEPGLVVGYSLGEYPALYVAGVLSVHDVIFLVGNRARLMQERCESGSYAMLATQSSPQDLEQVLGAYPSCAVACKGAPRSTVVSGPTEDITQLHSELKEKNINGTLLNVPYGFHCAQVDPILDDFRDMADGIQFNKPRIPVASSLEGTVVTEEGVFSSAYLVRQTREPVNFIGAVKAAESSGRADNTTVWIEIGPKRVLSSLVKSTLSADQGRLLHTIDDKDSNWKTIAAAMTAGYTEGMSIKWPKFHKLFSKHLTLLELPTYAFDLKDYWIPPAVPVTAAAPVAAPAADPSLPVIPVVPGFPTASLQQVRSEQINGDEAKVTFETVISHPALLAVIRGHRVGGVDLFPASGFMDMAFSAAKYIHHRTKSGQPVPEISMKHLAITHPLTPSSGQSRQIVIVTASKRSGSSVVDVSFRSRDGSAEQDHGDCKLHFDKRGSWDAEWAQTAHFINAAKKNVIANGTSPAGTGHRLPKSVVYKLFSSLVEYSGAFRAMEEVYVTDDFQKEAVASVVLPGGSSEFYVNPYWSDALIHVCGFLLNSSPNLPSQDCFLFNGLEEMRLLSDDLQPGIPYTSYVYLTEPGSSPDSQAPRPKHARGDVYVFQGEKIVGVAKGVVFQRLTRRVLATVLGGKLPGAAAPVREIAAPAPIRAVAPAPAPVAPRPVEMYRVPGVVGDEKADAAIGKILARAGANPAHITDATTFAEIGFDSLEWIELVREIRTSLDLEVPASFFFEYPKVNGLRRAISELSLDYQGPASGSVSVSSSATTTHGMTTPSSTSSAQSSQSSQTPDGPGIYANAVIDIVLSQTGFDKADLLPTTRFDDMGLDSLCTMEVVGVVREQTGLDLPASFFHQNPTVAHVRRALGSDSDGDSKPKSAPAPPAPEPVVEVAAPAPAVQAPPAILDGDLASYHCDFFLMQGSSDSTKTPLFFLPDGTGYPAVLLKLPPIFEGDNALFTCKSPLLNVAEGREVRCTIEGLAAAYAAAIQRARPHGPYLLAGYSLGGAYAFEVAKILADAGEVVQGLLFVDFNMAASVGKLHRDRNPVPVDLTVGAMEKTGWMQGIQNDDKDFNIPPAPPKIKFHALSVFKSLISYYPTPMTPSQRPRNTYALWAGIGMQDLLGTKNAGFLPAYGIIDWQMGDRHENNGPAGWEEYIGGPVKCATMPCDHLSLLMSHHWIPKSAEVIKGLLKDAMDN.

The Starter acyltransferase (SAT) domain occupies 16–255 (FFGDQTVDAL…MQLPLGTPAH (240 aa)). A Ketosynthase family 3 (KS3) domain is found at 382 to 815 (SNLIAVVGQS…GGNNCVLLEE (434 aa)). Active-site for beta-ketoacyl synthase activity residues include Cys554, His690, and His729. One can recognise a Malonyl-CoA:ACP transacylase (MAT) domain in the interval 914–1204 (VFAFTGQGAQ…SSLVKSTLSA (291 aa)). Residues 1299–1623 (TASLQQVRSE…TRRVLATVLG (325 aa)) are product template (PT) domain. The N-terminal hotdog fold stretch occupies residues 1303-1434 (QQVRSEQING…CKLHFDKRGS (132 aa)). The 317-residue stretch at 1303–1619 (QQVRSEQING…FQRLTRRVLA (317 aa)) folds into the PKS/mFAS DH domain. His1335 acts as the Proton acceptor; for dehydratase activity in catalysis. Residues 1463 to 1619 (TGHRLPKSVV…FQRLTRRVLA (157 aa)) form a C-terminal hotdog fold region. The active-site Proton donor; for dehydratase activity is Asp1523. A Carrier 1 domain is found at 1666–1742 (VGDEKADAAI…GLRRAISELS (77 aa)). O-(pantetheine 4'-phosphoryl)serine is present on Ser1702. The disordered stretch occupies residues 1747-1785 (GPASGSVSVSSSATTTHGMTTPSSTSSAQSSQSSQTPDG). The segment covering 1749-1783 (ASGSVSVSSSATTTHGMTTPSSTSSAQSSQSSQTP) has biased composition (low complexity). Residues 1784–1861 (DGPGIYANAV…HVRRALGSDS (78 aa)) enclose the Carrier 2 domain. Position 1821 is an O-(pantetheine 4'-phosphoryl)serine (Ser1821). The tract at residues 1857–1878 (LGSDSDGDSKPKSAPAPPAPEP) is disordered. Residues 1921 to 2163 (LFFLPDGTGY…TMPCDHLSLL (243 aa)) are thioesterase (TE) domain.

Requires pantetheine 4'-phosphate as cofactor.

It participates in secondary metabolite biosynthesis. In terms of biological role, non-reducing polyketide synthase; part of the gene cluster that mediates the biosynthesis of menisporopsin A, a bioactive macrocyclic polylactone. The biosynthesis of menisporopsin A is performed by a reducing (man1) and a non-reducing (men2) polyketide synthase that catalyze the formation of each menisporopsin A subunits, while the esterification and cyclolactonization activities are probably peformed by the unusual thioesterase domain of men2. First, a reduced diketide intermediate, 3-hydroxybutyryl-S-ACP is produced by men1 and transferred to men2; this is followed by a second reduced diketide which is further elongated using 3 units of malonyl-coA to form a reduced pentaketide. The cyclization of this intermediate by the PT domain forms the second subunit, 2,4-dihydroxy-6-(2-hydroxy-n-propyl)benzoyl-S-ACP. The TE domain of men2 then esterifies the secondary hydroxyl group on the side chain of the second subunit with the acyl-TE of the first subunit to form the first ester intermediate. This process occurs iteratively to form a linear tetraester intermediate. The final subunit is formed by a similar process, except that an extra malonyl-CoA is required in an additional elongation step to form a reduced hexaketide intermediate, and the carbonyl group next to the secondary hydroxyl group is reduced by a trans-acting ketoreductase. Again, the PT domain catalyzes cyclization to form the largest subunit, 2,4-dihydroxy-6-(2,4-dihydroxy-n-pentyl) benzoyl-S-ACP. Then the linear pentaester intermediate is formed. In this step, if the intermediate transfer rate is slow, intra- molecular cyclization involving the secondary hydroxyl group of the pentaester intermediate may occur to form menisporopsin B. Alternatively, transfer of the pentaester intermediate to the TE domain would allow cyclolactonization to be catalyzed by the TE to form menisporopsin A. This is Non-reducing polyketide synthase men2 from Menisporopsis theobromae.